Here is a 25-residue protein sequence, read N- to C-terminus: Caerin-2.2 (25 aa).

It belongs to the frog skin active peptide (FSAP) family. Caerin subfamily. In terms of tissue distribution, expressed by the skin parotoid and/or rostral glands.

The protein resides in the secreted. Its function is as follows. Antimicrobial peptide, that adopts an alpha helical conformation which can disrupt bacterial membranes. Each caerin displays a different antimicrobial specificity. The sequence is that of Caerin-2.2 from Ranoidea caerulea (Green tree frog).